The following is a 346-amino-acid chain: N-acetyl-gamma-glutamyl-phosphate reductase (346 aa).

Cys150 is a catalytic residue.

Belongs to the NAGSA dehydrogenase family. Type 1 subfamily.

It localises to the cytoplasm. It carries out the reaction N-acetyl-L-glutamate 5-semialdehyde + phosphate + NADP(+) = N-acetyl-L-glutamyl 5-phosphate + NADPH + H(+). Its pathway is amino-acid biosynthesis; L-arginine biosynthesis; N(2)-acetyl-L-ornithine from L-glutamate: step 3/4. Functionally, catalyzes the NADPH-dependent reduction of N-acetyl-5-glutamyl phosphate to yield N-acetyl-L-glutamate 5-semialdehyde. The polypeptide is N-acetyl-gamma-glutamyl-phosphate reductase (Desulforudis audaxviator (strain MP104C)).